The primary structure comprises 132 residues: Small ribosomal subunit protein uS8c (132 aa).

Belongs to the universal ribosomal protein uS8 family. As to quaternary structure, part of the 30S ribosomal subunit.

It localises to the plastid. The protein resides in the chloroplast. In terms of biological role, one of the primary rRNA binding proteins, it binds directly to 16S rRNA central domain where it helps coordinate assembly of the platform of the 30S subunit. The polypeptide is Small ribosomal subunit protein uS8c (rps8) (Platanus occidentalis (Sycamore)).